A 325-amino-acid chain; its full sequence is E3 ubiquitin-protein ligase SIAH2 (325 aa).

The segment covering 1 to 15 (MSRPSSTGPSANKPC) has biased composition (polar residues). A disordered region spans residues 1-43 (MSRPSSTGPSANKPCSKQPPPPQTPHAPSPAAPPAAATISAAG). A Phosphoserine modification is found at S6. Residue S16 is modified to Phosphoserine; by DYRK2. Positions 17–33 (KQPPPPQTPHAPSPAAP) are enriched in pro residues. T24 is modified (phosphothreonine; by MAPK14). Position 29 is a phosphoserine; by DYRK2 and MAPK14 (S29). The span at 34–43 (PAAATISAAG) shows a compositional bias: low complexity. S69 is modified (phosphoserine; by DYRK2). The RING-type zinc-finger motif lies at 81–116 (CPVCFDYVLPPILQCQAGHLVCNQCRQKLSCCPTCR). T120 is subject to Phosphothreonine; by DYRK2. The interval 131-323 (VASAVLFPCK…LGINVTISTC (193 aa)) is SBD. The SIAH-type zinc-finger motif lies at 134-194 (AVLFPCKYAT…VMSHLMHAHK (61 aa)). Zn(2+) contacts are provided by C139, C146, H158, C162, C169, C176, H188, and H193.

This sequence belongs to the SINA (Seven in absentia) family. In terms of assembly, homodimer. Interacts with VAV1, without mediating its ubiquitin-mediated degradation. Probable component of some large E3 complex possibly composed of UBE2D1, SIAH2, CACYBP/SIP, SKP1, APC and TBL1X. Interacts with UBE2I. Interacts with UBE2E2. Interacts with PEG10, which may inhibit its activity. Interacts with PEG3 and EGLN2. Interacts with DYRK2. Interacts with SNCAIP. Interacts with NR1D1 and NR1D2. Interacts with DCC. Interacts with AXIN1. Phosphorylated at Thr-24 and Ser-29 by MAPK14, which mediates the degradation by the proteasome of EGLN3. Phosphorylated at Ser-29 by DYRK2; this increases the ubiquitin ligase activity and promotes degradation of EGLN3. Detected in brain (at protein level).

The protein resides in the cytoplasm. It is found in the nucleus. The catalysed reaction is S-ubiquitinyl-[E2 ubiquitin-conjugating enzyme]-L-cysteine + [acceptor protein]-L-lysine = [E2 ubiquitin-conjugating enzyme]-L-cysteine + N(6)-ubiquitinyl-[acceptor protein]-L-lysine.. It functions in the pathway protein modification; protein ubiquitination. E3 ubiquitin-protein ligase that mediates ubiquitination and subsequent proteasomal degradation of target proteins. E3 ubiquitin ligases accept ubiquitin from an E2 ubiquitin-conjugating enzyme in the form of a thioester and then directly transfers the ubiquitin to targeted substrates. Mediates E3 ubiquitin ligase activity either through direct binding to substrates or by functioning as the essential RING domain subunit of larger E3 complexes. Mediates ubiquitination and proteasomal degradation of DYRK2 in response to hypoxia. Promotes monoubiquitination of SNCA. Triggers the ubiquitin-mediated degradation of many substrates, including proteins involved in transcription regulation (GPS2, POU2AF1, PML, NCOR1), a cell surface receptor (DCC), an antiapoptotic protein (BAG1), and a protein involved in synaptic vesicle function in neurons (SYP). It is thereby involved in apoptosis, tumor suppression, cell cycle, transcription and signaling processes. Has some overlapping function with SIAH1. Triggers the ubiquitin-mediated degradation of TRAF2, whereas SIAH1 does not. Regulates cellular clock function via ubiquitination of circadian transcriptional repressors NR1D1 and NR1D2 leading to their proteasomal degradation. Plays an important role in mediating the rhythmic degradation/clearance of NR1D1 and NR1D2 contributing to their circadian profile of protein abundance. Mediates ubiquitination and degradation of EGLN2 and EGLN3 in response to the unfolded protein response (UPR), leading to their degradation and subsequent stabilization of ATF4. Also part of the Wnt signaling pathway in which it mediates the Wnt-induced ubiquitin-mediated proteasomal degradation of AXIN1. This Rattus norvegicus (Rat) protein is E3 ubiquitin-protein ligase SIAH2 (Siah2).